We begin with the raw amino-acid sequence, 1058 residues long: Ubiquitin-like modifier-activating enzyme 1 (1058 aa).

The disordered stretch occupies residues 1–46 (MSSSPLSKKRRVSGPDPKPGSNCSPAQSALSEVSSVPTNGMAKNGS). An N-acetylserine modification is found at S2. Residues S4, S13, S21, S24, and S46 each carry the phosphoserine modification. Over residues 21–38 (SNCSPAQSALSEVSSVPT) the composition is skewed to polar residues. Y55 carries the phosphotyrosine modification. Tandem repeats lie at residues 63-199 (GHEA…GQLF) and 459-611 (GSDF…QVVI). The interval 63 to 611 (GHEAMKMLQT…GTKGNVQVVI (549 aa)) is 2 approximate repeats. Residues A478, D504, R515, K528, and 576-577 (DN) each bind ATP. Residue K528 is modified to N6-succinyllysine. The active-site Glycyl thioester intermediate is C632. K671 is subject to N6-acetyllysine. A Phosphothreonine modification is found at T800. 4 positions are modified to phosphoserine: S810, S816, S820, and S835. At K980 the chain carries N6-acetyllysine.

It belongs to the ubiquitin-activating E1 family. Monomer. Interacts with GAN (via BTB domain). ISGylated. Ubiquitously expressed. In testis, expressed in A spermatogonia and spermatids but at very low levels in pachytene spermatocytes.

The protein resides in the cytoplasm. The protein localises to the mitochondrion. It localises to the nucleus. It catalyses the reaction ATP + ubiquitin + [E1 ubiquitin-activating enzyme]-L-cysteine = AMP + diphosphate + S-ubiquitinyl-[E1 ubiquitin-activating enzyme]-L-cysteine.. It participates in protein modification; protein ubiquitination. Catalyzes the first step in ubiquitin conjugation to mark cellular proteins for degradation through the ubiquitin-proteasome system. Activates ubiquitin by first adenylating its C-terminal glycine residue with ATP, and thereafter linking this residue to the side chain of a cysteine residue in E1, yielding a ubiquitin-E1 thioester and free AMP. Essential for the formation of radiation-induced foci, timely DNA repair and for response to replication stress. Promotes the recruitment of TP53BP1 and BRCA1 at DNA damage sites. This chain is Ubiquitin-like modifier-activating enzyme 1 (Uba1), found in Mus musculus (Mouse).